The chain runs to 79 residues: UPF0154 protein SAG1601 (79 aa).

A helical membrane pass occupies residues Ile-5 to Ala-25.

It belongs to the UPF0154 family.

Its subcellular location is the membrane. The sequence is that of UPF0154 protein SAG1601 from Streptococcus agalactiae serotype V (strain ATCC BAA-611 / 2603 V/R).